The following is a 492-amino-acid chain: GTPase Der (492 aa).

2 EngA-type G domains span residues 3 to 166 (PVVA…MDDV) and 205 to 378 (IKLA…DSST). GTP is bound by residues 9–16 (GRPNVGKS), 56–60 (DTGGI), 118–121 (NKTD), 211–218 (GRPNVGKS), 258–262 (DTAGV), and 323–326 (NKWD). The KH-like domain occupies 379-463 (RRVSTALLTR…PIRIQFKEGA (85 aa)).

This sequence belongs to the TRAFAC class TrmE-Era-EngA-EngB-Septin-like GTPase superfamily. EngA (Der) GTPase family. Associates with the 50S ribosomal subunit.

In terms of biological role, GTPase that plays an essential role in the late steps of ribosome biogenesis. The sequence is that of GTPase Der from Cronobacter sakazakii (strain ATCC BAA-894) (Enterobacter sakazakii).